The chain runs to 695 residues: DNA ligase (695 aa).

Position 30–34 (aspartate 30–aspartate 34) interacts with NAD(+). The disordered stretch occupies residues threonine 52 to arginine 71. Residues serine 81–leucine 82 and glutamate 106 each bind NAD(+). The active-site N6-AMP-lysine intermediate is lysine 108. Arginine 129, glutamate 169, lysine 285, and lysine 309 together coordinate NAD(+). 4 residues coordinate Zn(2+): cysteine 403, cysteine 406, cysteine 422, and cysteine 428. Residues valine 599–threonine 688 enclose the BRCT domain. Positions glutamate 676–aspartate 695 are disordered. Positions alanine 679–aspartate 695 are enriched in low complexity.

It belongs to the NAD-dependent DNA ligase family. LigA subfamily. It depends on Mg(2+) as a cofactor. Mn(2+) is required as a cofactor.

The catalysed reaction is NAD(+) + (deoxyribonucleotide)n-3'-hydroxyl + 5'-phospho-(deoxyribonucleotide)m = (deoxyribonucleotide)n+m + AMP + beta-nicotinamide D-nucleotide.. Its function is as follows. DNA ligase that catalyzes the formation of phosphodiester linkages between 5'-phosphoryl and 3'-hydroxyl groups in double-stranded DNA using NAD as a coenzyme and as the energy source for the reaction. It is essential for DNA replication and repair of damaged DNA. This Corynebacterium jeikeium (strain K411) protein is DNA ligase.